We begin with the raw amino-acid sequence, 645 residues long: Zinc finger protein 64 (645 aa).

3 C2H2-type zinc fingers span residues 175 to 197 (HKCE…MRCH), 203 to 225 (YKCK…LRIH), and 231 to 253 (FKCQ…LRSH). Glutamate 286 participates in a covalent cross-link: Glycyl lysine isopeptide (Lys-Gly) (interchain with G-Cter in SUMO2). Residues 299–324 (FNCCYPGCHFKTVHGMKDLDRHLRIH) form a C2H2-type 4; atypical zinc finger. C2H2-type zinc fingers lie at residues 330–352 (HKCE…MRCH), 358–380 (HKCH…LRIH), 386–408 (YKCQ…LRSH), 414–436 (FQCW…MIVH), 442–465 (FKCE…RIKH), 467–489 (FKCL…SRLH), 495–517 (EKCP…SRVH), 523–546 (FKCD…DKVH), and 580–602 (FRCE…KKQH). A Glycyl lysine isopeptide (Lys-Gly) (interchain with G-Cter in SUMO2) cross-link involves residue asparagine 397. Composition is skewed to basic and acidic residues over residues 543–554 (DKVHRDEAKTEN) and 600–610 (KQHSDQSENKN). 2 disordered regions span residues 543–567 (DKVH…REGS) and 600–645 (KQHS…SQDL). Residue valine 545 is modified to Phosphoserine. Over residues 622 to 631 (ASGQLSTLVS) the composition is skewed to polar residues.

This sequence belongs to the krueppel C2H2-type zinc-finger protein family. As to quaternary structure, interacts with ZNF70; this interaction promote the transactivation of the HES1 gene. Interacts with NOTCH1.

Its subcellular location is the nucleus. In terms of biological role, may be involved in the regulation of mesenchymal cell differentiation through transactivation of NOTCH1 target genes. This chain is Zinc finger protein 64, found in Homo sapiens (Human).